Here is a 1053-residue protein sequence, read N- to C-terminus: MFGRSRSWVGGGHGKTSRNIHSLDHLKYLYHVLTKNTTVTEQNRNLLVETIRSITEILIWGDQNDSSVFDFFLEKNMFVFFLNILRQKSGRYVCVQLLQTLNILFENISHETSLYYLLSNNYVNSIIVHKFDFSDEEIMAYYISFLKTLSLKLNNHTVHFFYNEHTNDFALYTEAIKFFNHPESMVRIAVRTITLNVYKVSLDNQAMLHYIRDKTAVPYFSNLVWFIGSHVIELDDCVQTDEEHRNRGKLSDLVAEHLDHLHYLNDILIINCEFLNDVLTDHLLNRLFLPLYVYSLENQDKGGERPKISLPVSLYLLSQVFLIIHHAPLVNSLAEVILNGDLSEMYAKTEQDIQRSSAKPSIRCFIKPTETLERSLEMNKHKGKRRVQKRPNYKNVGEEEDEEKGPTEDAQEDAEKAKGTEGGSKGIKTSGESEEIEMVIMERSKLSELAASTSVQEQNTTDEEKSAAATCSESTQWSRPFLDMVYHALDSPDDDYHALFVLCLLYAMSHNKGMDPEKLERIQLPVPNAAEKTTYNHPLAERLIRIMNNAAQPDGKIRLATLELSCLLLKQQVLMSAGCIMKDVHLACLEGAREESVHLVRHFYKGEDIFLDMFEDEYRSMTMKPMNVEYLMMDASILLPPTGTPLTGIDFVKRLPCGDVEKTRRAIRVFFMLRSLSLQLRGEPETQLPLTREEDLIKTDDVLDLNNSDLIACTVITKDGGMVQRFLAVDIYQMSLVEPDVSRLGWGVVKFAGLLQDMQVTGVEDDSRALNITIHKPASSPHSKPFPILQATFIFSDHIRCIIAKQRLAKGRIQARRMKMQRIAALLDLPIQPTTEVLGFGLGSSTSTQHLPFRFYDQGRRGSSDPTVQRSVFASVDKVPGFAVAQCINQHSSPSLSSQSPPSASGSPSGSGSTSHCDSGGTSSSSTPSTAQSPADAPMSPELPKPHLPDQLVIVNETEADSKPSKNVARSAAVETASLSPSLVPARQPTISLLCEDTADTLSVESLTLVPPVDPHSLRSLTGMPPLSTPAAACTEPVGEEAACAEPVGTAED.

An FPL domain is found at 51–198 (IRSITEILIW…AVRTITLNVY (148 aa)). Disordered regions lie at residues 375-434 (SLEM…GESE), 452-471 (STSVQEQNTTDEEKSAAATC), and 892-983 (SSPS…SPSL). Residues 381–392 (HKGKRRVQKRPN) show a composition bias toward basic residues. The segment covering 892 to 938 (SSPSLSSQSPPSASGSPSGSGSTSHCDSGGTSSSSTPSTAQSPADAP) has biased composition (low complexity).

This sequence belongs to the CLEC16A/gop-1 family. As to quaternary structure, interacts with RNF41/NRDP1. As to expression, almost exclusively expressed in immune cells, including dendritic cells, B-lymphocytes and natural killer cells.

Its subcellular location is the endosome membrane. The protein resides in the lysosome membrane. Its function is as follows. Regulator of mitophagy through the upstream regulation of the RNF41/NRDP1-PRKN pathway. Mitophagy is a selective form of autophagy necessary for mitochondrial quality control. The RNF41/NRDP1-PRKN pathway regulates autophagosome-lysosome fusion during late mitophagy. May protect RNF41/NRDP1 from proteasomal degradation, RNF41/NRDP1 which regulates proteasomal degradation of PRKN. Plays a key role in beta cells functions by regulating mitophagy/autophagy and mitochondrial health. This Homo sapiens (Human) protein is Protein CLEC16A.